The sequence spans 1941 residues: Myosin-7B (1941 aa).

A Myosin N-terminal SH3-like domain is found at 30 to 80; that stretch reads DGKKRVWVPDEQDAYVEAEVKTEATGGKVTVETKDQKVLTVRETEMQPMNP. One can recognise a Myosin motor domain in the interval 84–785; sequence DLLEDMAMMT…LLGILEELRD (702 aa). An ATP-binding site is contributed by 177 to 184; that stretch reads GESGAGKT. 2 actin-binding regions span residues 662-684 and 764-778; these read LNKL…VPNE and QFGH…GLLG. Residues 788-817 enclose the IQ domain; the sequence is LAKVLTLLQARSRGRLMRLEYQRMLGGRDA. Residues 846 to 1935 are a coiled coil; that stretch reads LLRSAQAEEE…KLRARSRDAL (1090 aa). Residues 1887–1941 are disordered; it reads RQFEEAEQQASTNLAKYRKAQHELDDAEERADMAETQANKLRARSRDALGPKHKE. Basic and acidic residues predominate over residues 1930–1941; sequence RSRDALGPKHKE.

This sequence belongs to the TRAFAC class myosin-kinesin ATPase superfamily. Myosin family. In terms of assembly, muscle myosin is a hexameric protein that consists of 2 heavy chain subunits (MHC), 2 alkali light chain subunits (MLC) and 2 regulatory light chain subunits (MLC-2).

It is found in the membrane. Its function is as follows. Involved in muscle contraction. In Mus musculus (Mouse), this protein is Myosin-7B (Myh7b).